A 482-amino-acid chain; its full sequence is Glucose starvation modulator protein 1 (482 aa).

A DNA-binding region (zn(2)-C6 fungal-type) is located at residues 20–48 (CVFCHEKHLQCDVGRPCQNCEKRNIGESC). Positions 350–422 (LLEYENMSKM…KLFNEYLAFS (73 aa)) constitute a PAS domain.

The protein belongs to the ERT1/acuK family.

It is found in the nucleus. Transcription factor which regulates nonfermentable carbon utilization. The polypeptide is Glucose starvation modulator protein 1 (GSM1) (Eremothecium gossypii (strain ATCC 10895 / CBS 109.51 / FGSC 9923 / NRRL Y-1056) (Yeast)).